Reading from the N-terminus, the 596-residue chain is Elongation factor 4 (596 aa).

In terms of domain architecture, tr-type G spans 2 to 183 (KNIRNFSIIA…AIITRIPAPN (182 aa)). GTP contacts are provided by residues 14-19 (DHGKST) and 130-133 (NKID).

The protein belongs to the TRAFAC class translation factor GTPase superfamily. Classic translation factor GTPase family. LepA subfamily.

The protein resides in the cell inner membrane. The catalysed reaction is GTP + H2O = GDP + phosphate + H(+). Required for accurate and efficient protein synthesis under certain stress conditions. May act as a fidelity factor of the translation reaction, by catalyzing a one-codon backward translocation of tRNAs on improperly translocated ribosomes. Back-translocation proceeds from a post-translocation (POST) complex to a pre-translocation (PRE) complex, thus giving elongation factor G a second chance to translocate the tRNAs correctly. Binds to ribosomes in a GTP-dependent manner. The protein is Elongation factor 4 of Campylobacter concisus (strain 13826).